Reading from the N-terminus, the 126-residue chain is Penton protein P31 (126 aa).

The protein localises to the virion. Functionally, in association with P2 and trimeric P5, forms the spike complexes located at the 5-fold vertices of the capsid. Essential for viral infectivity. In Acinetobacter calcoaceticus (Arthrobacter siderocapsulatus), this protein is Penton protein P31 (XXXI).